Reading from the N-terminus, the 505-residue chain is One cut domain family member 2 (505 aa).

Disordered regions lie at residues 29-94 (LGTL…GTAA), 165-190 (KFHH…RLSG), and 275-333 (EQHL…QLEE). The span at 35–56 (PVGGGSGGGGGGGGGGGGGGPG) shows a compositional bias: gly residues. Over residues 167 to 187 (HHPHPHHHPHHHHHHHHHHQR) the composition is skewed to basic residues. The CUT DNA-binding region spans 325 to 411 (VATSGQLEEI…QRMSALRLAA (87 aa)). Positions 427–486 (QKKSRLVFTDLQRRTLFAIFKENKRPSKEMQITISQQLGLELTTVSNFFMNARRRSLEKW) form a DNA-binding region, homeobox.

The protein belongs to the CUT homeobox family.

Its subcellular location is the nucleus. Its function is as follows. Transcriptional activator. Activates the transcription of a number of liver genes such as HNF3B. This chain is One cut domain family member 2 (Onecut2), found in Mus musculus (Mouse).